We begin with the raw amino-acid sequence, 282 residues long: Undecaprenyl-diphosphatase (282 aa).

Transmembrane regions (helical) follow at residues 40-60, 85-105, 117-137, 158-178, 193-213, 231-251, and 258-278; these read GAAFTAIVQIGTLIAVLIYFF, AKMGWMIAAGTIPIVVFGLLF, YWISAALITLAIILSLAEWLI, ALIIGLVQSIALIPGSSRSGV, AARFSFLLSLPAVFAAGIYQL, IVATLVAGIVGYASIAFLITF, and AVFIIYRIALGLTILALIATG.

The protein belongs to the UppP family.

It localises to the cell inner membrane. The catalysed reaction is di-trans,octa-cis-undecaprenyl diphosphate + H2O = di-trans,octa-cis-undecaprenyl phosphate + phosphate + H(+). Functionally, catalyzes the dephosphorylation of undecaprenyl diphosphate (UPP). Confers resistance to bacitracin. The sequence is that of Undecaprenyl-diphosphatase from Prosthecochloris aestuarii (strain DSM 271 / SK 413).